The chain runs to 362 residues: 4-hydroxytryptamine kinase (362 aa).

Residues Asn37, Lys57, and 118 to 120 (QDV) each bind ATP. Asp224 is a catalytic residue. 249–251 (DWE) is an ATP binding site.

Belongs to the methylthioribose kinase family. In terms of assembly, monomer. The cofactor is Mg(2+).

It catalyses the reaction 4-hydroxytryptamine + ATP = norbaeocystin + ADP + H(+). The enzyme catalyses psilocin + ATP = psilocybin + ADP + H(+). The catalysed reaction is 4-hydroxy-N,N,N-trimethyltryptamine + ATP = aeruginascin + ADP + H(+). It participates in secondary metabolite biosynthesis. In terms of biological role, 4-hydroxytryptamine kinase; part of the gene cluster that mediates the biosynthesis of psilocybin, a psychotropic tryptamine-derived natural product. The first step in the pathway is the decarboxylation of L-tryptophan to tryptamine by the decarboxylase psiD. 4-hydroxy-L-tryptophan is accepted as substrate by psiD as well. The cytochrome P450 monooxygenase psiH then converts tryptamine to 4-hydroxytryptamine. The kinase psiK catalyzes the 4-O-phosphorylation step by converting 4-hydroxytryptamine into norbaeocystin. The methyltransferase psiM then catalyzes iterative methyl transfer to the amino group of norbaeocystin to yield psilocybin via a monomethylated intermediate, baeocystin. 4-hydroxy-6-methyl-l-tryptophancan also be converted the decarboxylase PsiD, kinase PsiK, and methyltransferase PsiM into respectively 6-methyl-norbaeocystin, 6-methylbaeocystin, and 6-methylpsilocybin. PsiK kinase can also turn psilocin into psilocybin. This activity may represent a protective mechanism to rephosphorylate the unstable psilocin to the stable psilocybin in case of intracellular ester cleavage. Moreover, psiK is able to O-phosphorylate the quaternary amine 4-hydroxy-N,N,N-trimethyltryptamine (4-OH-TMT) to yield aeruginascin, another bioactive compound found in Psilocybe species. The protein is 4-hydroxytryptamine kinase of Psilocybe cubensis (Psychedelic mushroom).